A 459-amino-acid polypeptide reads, in one-letter code: DIMBOA UDP-glucosyltransferase BX8 (459 aa).

The active-site Proton acceptor is histidine 19. An an anthocyanidin-binding site is contributed by histidine 19. Residue aspartate 119 is the Charge relay of the active site. Positions 141, 340, 342, 357, 360, 361, 362, and 365 each coordinate UDP-alpha-D-glucose. Glycine 380 serves as a coordination point for an anthocyanidin. UDP-alpha-D-glucose is bound by residues aspartate 381 and glutamine 382.

This sequence belongs to the UDP-glycosyltransferase family. It depends on Mg(2+) as a cofactor. Requires Ca(2+) as cofactor. Expressed at the same levels in roots and shoots.

The catalysed reaction is DIMBOA + UDP-alpha-D-glucose = DIMBOA beta-D-glucoside + UDP + H(+). The enzyme catalyses DIBOA + UDP-alpha-D-glucose = DIBOA beta-D-glucoside + UDP + H(+). In terms of biological role, glucosyltransferase involved in the last step of benzoxazinoid glucoside biosynthesis. Catalyzes the glucosylation of hydroxamic acids utilizing UDP-glucose as glucose doner, reducing the toxicity of these natural insecticides for storage. Can use DIMBOA and DIBOA as substrates, HMBOA (2-hydroxy-7-methoxy-2H-1,4-benzoxazin-3(4H)-one) and HBOA (2-hydroxy-2H-1,4-benzoxazin-3(4H)-one) with a lower efficiency, but not indole acetic acid or quercitin. The protein is DIMBOA UDP-glucosyltransferase BX8 (Bx8) of Zea mays (Maize).